A 557-amino-acid polypeptide reads, in one-letter code: Formate--tetrahydrofolate ligase 2 (557 aa).

Residue 66–73 (TPAGEGKT) coordinates ATP.

Belongs to the formate--tetrahydrofolate ligase family.

The enzyme catalyses (6S)-5,6,7,8-tetrahydrofolate + formate + ATP = (6R)-10-formyltetrahydrofolate + ADP + phosphate. It participates in one-carbon metabolism; tetrahydrofolate interconversion. This is Formate--tetrahydrofolate ligase 2 from Streptococcus pyogenes serotype M4 (strain MGAS10750).